A 213-amino-acid chain; its full sequence is Na(+)-translocating NADH-quinone reductase subunit D (213 aa).

The next 7 helical transmembrane spans lie at 14-34, 42-62, 77-97, 101-121, 131-151, 154-174, and 183-203; these read ALWI…ALAV, LTMG…VSLL, IIIS…FFNI, LSVF…AESM, FLDG…ISII, LFGF…YASA, and LGLM…VWLV.

The protein belongs to the NqrDE/RnfAE family. Composed of six subunits; NqrA, NqrB, NqrC, NqrD, NqrE and NqrF.

It is found in the cell inner membrane. It carries out the reaction a ubiquinone + n Na(+)(in) + NADH + H(+) = a ubiquinol + n Na(+)(out) + NAD(+). NQR complex catalyzes the reduction of ubiquinone-1 to ubiquinol by two successive reactions, coupled with the transport of Na(+) ions from the cytoplasm to the periplasm. NqrA to NqrE are probably involved in the second step, the conversion of ubisemiquinone to ubiquinol. The polypeptide is Na(+)-translocating NADH-quinone reductase subunit D (Chlamydia muridarum (strain MoPn / Nigg)).